We begin with the raw amino-acid sequence, 226 residues long: MSLLARLEQSVHENGGLIVSCQPVPGSPMDKPEIVAAMAQAAASAGAVAVRIEGIENLRTVRPHLSVPIIGIIKRDLTGSPVRITPYLQDVDALAQAGADIIAFDASFRSRPVDIDSLLTRIRLHGLLAMADCSTVNEGISCHQKGIEFIGTTLSGYTGPITPVEPDLAMVTQLSHAGCRVIAEGRYNTPALAANAIEHGAWAVTVGSAITRIEHICQWFSHAVKR.

It belongs to the NanE family.

It catalyses the reaction an N-acyl-D-glucosamine 6-phosphate = an N-acyl-D-mannosamine 6-phosphate. It participates in amino-sugar metabolism; N-acetylneuraminate degradation; D-fructose 6-phosphate from N-acetylneuraminate: step 3/5. Its function is as follows. Converts N-acetylmannosamine-6-phosphate (ManNAc-6-P) to N-acetylglucosamine-6-phosphate (GlcNAc-6-P). This chain is Putative N-acetylmannosamine-6-phosphate 2-epimerase 1 (nanE1), found in Salmonella typhimurium (strain LT2 / SGSC1412 / ATCC 700720).